Here is a 128-residue protein sequence, read N- to C-terminus: Hemoglobin subunit beta-1 (128 aa).

The Globin domain maps to 2 to 128; the sequence is HWTAEEKALV…VVDALSKGYH (127 aa). Heme b is bound by residues His51 and His74.

It belongs to the globin family. As to quaternary structure, hb 1 is a heterotetramer of two alpha and two beta-1 chains. Red blood cells (at protein level).

Functionally, involved in oxygen transport from gills to the various peripheral tissues. The chain is Hemoglobin subunit beta-1 from Somniosus microcephalus (Greenland sleeper shark).